The chain runs to 359 residues: Stearoyl-CoA desaturase (359 aa).

The Cytoplasmic segment spans residues 1 to 72; it reads MPAHLLQEEI…EGPKPKLEYV (72 aa). Residues 73 to 93 traverse the membrane as a helical segment; that stretch reads WRNIILMSLLHLGALYGITLI. N75 contributes to the substrate binding site. The Lumenal segment spans residues 94-97; the sequence is PTCK. Residues 98-118 traverse the membrane as a helical segment; sequence IYTYIWVLFYYLMGALGITAG. Residues 119–217 are Cytoplasmic-facing; sequence AHRLWSHRTY…EKLVMFQRRY (99 aa). The Fe cation site is built by H120 and H125. The short motif at 120 to 125 is the Histidine box-1 element; the sequence is HRLWSH. Positions 148, 155, and 156 each coordinate substrate. H157, H160, and H161 together coordinate Fe cation. The short motif at 157 to 161 is the Histidine box-2 element; that stretch reads HRAHH. Positions 188 and 189 each coordinate substrate. S198 and S203 each carry phosphoserine. Residues 218–237 traverse the membrane as a helical segment; sequence YKPGVLLLCFILPTLVPWYL. Topologically, residues 238–241 are lumenal; that stretch reads WDET. Residues 242–263 traverse the membrane as a helical segment; the sequence is FQNSLFFATLFRYALGLNVTWL. A substrate-binding site is contributed by W262. Residues 264-359 lie on the Cytoplasmic side of the membrane; that stretch reads VNSAAHMYGY…RTGEESYKSG (96 aa). 4 residues coordinate Fe cation: H269, H298, H301, and H302. The Histidine box-3 signature appears at 298–302; it reads HNYHH.

Belongs to the fatty acid desaturase type 1 family. It depends on Fe(2+) as a cofactor.

The protein resides in the endoplasmic reticulum membrane. The enzyme catalyses octadecanoyl-CoA + 2 Fe(II)-[cytochrome b5] + O2 + 2 H(+) = (9Z)-octadecenoyl-CoA + 2 Fe(III)-[cytochrome b5] + 2 H2O. It carries out the reaction hexadecanoyl-CoA + 2 Fe(II)-[cytochrome b5] + O2 + 2 H(+) = (9Z)-hexadecenoyl-CoA + 2 Fe(III)-[cytochrome b5] + 2 H2O. In terms of biological role, stearoyl-CoA desaturase that utilizes O(2) and electrons from reduced cytochrome b5 to introduce the first double bond into saturated fatty acyl-CoA substrates. Catalyzes the insertion of a cis double bond at the delta-9 position into fatty acyl-CoA substrates including palmitoyl-CoA and stearoyl-CoA. Gives rise to a mixture of 16:1 and 18:1 unsaturated fatty acids. Plays an important role in lipid biosynthesis. Plays an important role in regulating the expression of genes that are involved in lipogenesis and in regulating mitochondrial fatty acid oxidation. Plays an important role in body energy homeostasis. Contributes to the biosynthesis of membrane phospholipids, cholesterol esters and triglycerides. This is Stearoyl-CoA desaturase (SCD) from Bos taurus (Bovine).